Reading from the N-terminus, the 407-residue chain is Phosphopentomutase (407 aa).

Residues Asp-10, Asp-306, His-311, Asp-347, His-348, and His-359 each contribute to the Mn(2+) site.

It belongs to the phosphopentomutase family. The cofactor is Mn(2+).

The protein localises to the cytoplasm. The enzyme catalyses 2-deoxy-alpha-D-ribose 1-phosphate = 2-deoxy-D-ribose 5-phosphate. It catalyses the reaction alpha-D-ribose 1-phosphate = D-ribose 5-phosphate. The protein operates within carbohydrate degradation; 2-deoxy-D-ribose 1-phosphate degradation; D-glyceraldehyde 3-phosphate and acetaldehyde from 2-deoxy-alpha-D-ribose 1-phosphate: step 1/2. In terms of biological role, isomerase that catalyzes the conversion of deoxy-ribose 1-phosphate (dRib-1-P) and ribose 1-phosphate (Rib-1-P) to deoxy-ribose 5-phosphate (dRib-5-P) and ribose 5-phosphate (Rib-5-P), respectively. The protein is Phosphopentomutase of Pectobacterium atrosepticum (strain SCRI 1043 / ATCC BAA-672) (Erwinia carotovora subsp. atroseptica).